Here is a 299-residue protein sequence, read N- to C-terminus: Diaminopimelate epimerase (299 aa).

Residues Asn-11 and Asn-63 each coordinate substrate. The Proton donor role is filled by Cys-72. Residues 73–74, Asn-211, and 229–230 each bind substrate; these read GN and ER. Residue Cys-238 is the Proton acceptor of the active site. 239–240 contacts substrate; sequence GT.

This sequence belongs to the diaminopimelate epimerase family. As to quaternary structure, homodimer.

Its subcellular location is the cytoplasm. The enzyme catalyses (2S,6S)-2,6-diaminopimelate = meso-2,6-diaminopimelate. The protein operates within amino-acid biosynthesis; L-lysine biosynthesis via DAP pathway; DL-2,6-diaminopimelate from LL-2,6-diaminopimelate: step 1/1. In terms of biological role, catalyzes the stereoinversion of LL-2,6-diaminopimelate (L,L-DAP) to meso-diaminopimelate (meso-DAP), a precursor of L-lysine and an essential component of the bacterial peptidoglycan. The protein is Diaminopimelate epimerase of Natranaerobius thermophilus (strain ATCC BAA-1301 / DSM 18059 / JW/NM-WN-LF).